Here is a 126-residue protein sequence, read N- to C-terminus: Holo-[acyl-carrier-protein] synthase (126 aa).

Residues Asp-9 and Glu-58 each contribute to the Mg(2+) site.

It belongs to the P-Pant transferase superfamily. AcpS family. Mg(2+) is required as a cofactor.

It is found in the cytoplasm. The catalysed reaction is apo-[ACP] + CoA = holo-[ACP] + adenosine 3',5'-bisphosphate + H(+). In terms of biological role, transfers the 4'-phosphopantetheine moiety from coenzyme A to a Ser of acyl-carrier-protein. This is Holo-[acyl-carrier-protein] synthase from Vibrio vulnificus (strain YJ016).